A 369-amino-acid polypeptide reads, in one-letter code: MADSVPGHVAGGGLQGFSVDAECIKQRVDEVLQWVDSLEHKLKEVEEFYSSIGVSNSGSIGKDTEKGRHVVGIRKIQQEAARREAVAAKRMQDLMRQFGTIFRQITQHKCAWPFMHPVNVEGLGLHDYFEVIDKPMDFSTIKNQMEAKDGTGYKHVMQIYADMRLVFENAMNYNEETSDVYSMAKKLLEKFEEKWAHFLPKVQEEEKIREEEEKQAAKEALLAKEASHIKTTRELGNEICHANDELEKLMRKVVERCRKITIEEKRNIGLALLKLSPDDLQKVLGIVAQANPSFQPRAEEVSIEMDILDEPTLWRLKFFVKDALDNAMKKKKEEETKTRELSGAQKKEVSKKRNATTKLAERKTKRSRI.

A Bromo domain is found at 89 to 198 (KRMQDLMRQF…EKFEEKWAHF (110 aa)). Positions 201-263 (KVQEEEKIRE…VERCRKITIE (63 aa)) form a coiled coil. One can recognise an NET domain in the interval 250–331 (MRKVVERCRK…DALDNAMKKK (82 aa)). The span at 329-348 (KKKKEEETKTRELSGAQKKE) shows a compositional bias: basic and acidic residues. Residues 329 to 369 (KKKKEEETKTRELSGAQKKEVSKKRNATTKLAERKTKRSRI) are disordered. The Bipartite nuclear localization signal motif lies at 351–368 (KKRNATTKLAERKTKRSR).

In terms of tissue distribution, abundantly expressed in flowers. Weakly expressed in roots, leaves and siliques; and undetectable in 5-day-old seedlings. In the basal rosette leaves of 21-day-old plants, it is more abundant in leaves 6 and 7, which possess narrow elliptical laminae, than in leaves 1-4, which have round laminae, suggesting a possible correlation between its expression and the formation of elliptical leaf laminae in mature leaves.

Its subcellular location is the nucleus. Functionally, regulates differences in leaf patterning between juvenile and mature leaves by controlling differences in the development of primordia produced during juvenile and mature phases. Acts by activating transcription of the myb-domain protein AS1, a gene involved in leaf-axis specification. Associates with the promoter and the start of the transcribed region of AS1 and up-regulates expression of AS1 through acetylation of histones H3 and H4. The chain is Transcription factor GTE6 (GTE6) from Arabidopsis thaliana (Mouse-ear cress).